We begin with the raw amino-acid sequence, 169 residues long: Crossover junction endodeoxyribonuclease RuvC (169 aa).

Residues D7, E67, and D140 contribute to the active site. 3 residues coordinate Mg(2+): D7, E67, and D140.

Belongs to the RuvC family. Homodimer which binds Holliday junction (HJ) DNA. The HJ becomes 2-fold symmetrical on binding to RuvC with unstacked arms; it has a different conformation from HJ DNA in complex with RuvA. In the full resolvosome a probable DNA-RuvA(4)-RuvB(12)-RuvC(2) complex forms which resolves the HJ. The cofactor is Mg(2+).

It localises to the cytoplasm. It carries out the reaction Endonucleolytic cleavage at a junction such as a reciprocal single-stranded crossover between two homologous DNA duplexes (Holliday junction).. Functionally, the RuvA-RuvB-RuvC complex processes Holliday junction (HJ) DNA during genetic recombination and DNA repair. Endonuclease that resolves HJ intermediates. Cleaves cruciform DNA by making single-stranded nicks across the HJ at symmetrical positions within the homologous arms, yielding a 5'-phosphate and a 3'-hydroxyl group; requires a central core of homology in the junction. The consensus cleavage sequence is 5'-(A/T)TT(C/G)-3'. Cleavage occurs on the 3'-side of the TT dinucleotide at the point of strand exchange. HJ branch migration catalyzed by RuvA-RuvB allows RuvC to scan DNA until it finds its consensus sequence, where it cleaves and resolves the cruciform DNA. The sequence is that of Crossover junction endodeoxyribonuclease RuvC from Clostridioides difficile (strain 630) (Peptoclostridium difficile).